Consider the following 336-residue polypeptide: D-alanine--D-alanine ligase (336 aa).

Positions 124-330 (KMWFSALGIP…FTEYLSLVIN (207 aa)) constitute an ATP-grasp domain. 154–209 (ALENWGSIFVKAASQGSSVGCYKVDDSSKVADVLKDAFGYAPYVIVEKTIKARELE) serves as a coordination point for ATP. Mg(2+) contacts are provided by Asp284, Glu297, and Asn299.

It belongs to the D-alanine--D-alanine ligase family. Requires Mg(2+) as cofactor. Mn(2+) is required as a cofactor.

It localises to the cytoplasm. It catalyses the reaction 2 D-alanine + ATP = D-alanyl-D-alanine + ADP + phosphate + H(+). The protein operates within cell wall biogenesis; peptidoglycan biosynthesis. Functionally, cell wall formation. In Shewanella sp. (strain ANA-3), this protein is D-alanine--D-alanine ligase.